The primary structure comprises 426 residues: MTKSVEGLVSVVLGAQWGDEGKGKLVDLLSESCSVVCRCQGGNNAGHTVVAGGQEYFFHLLPSGIVNPNVLAVIGNGVVVNLQALFQEIDEAVCKGLLDVSSRLRISDRCHLVFDIHQEIDRMEEELRGENSLGTTKKGIGPTYSSKVTRNGLRVCDLMGDWVQFTAKYKELVKYVKRRYPKLGINVEESLEKLSGMVCDSVILINKLVKSKQANILVEGAQSCMLDIDFGTYPHVTSSNCSVGGVCTGLGLSPSRVGRVYGVIKAYTTRVGSGPFPSELLDGIGEFIQKKGCEWGVTTKRKRRIGWLDTVVIRYAHIINDFNALALTKIDVLDDLEEVKIAKAYIDPETGRELDSFPSDSSVLNHVVVVYETLPGWKTSTHGCRVYEELPTAAKVFVETVEKLLNIPIRWIGTGASRDSIIIRSV.

GTP contacts are provided by residues 18–24 (GDEGKGK) and 46–48 (GHT). D19 functions as the Proton acceptor in the catalytic mechanism. Mg(2+) is bound by residues D19 and G46. IMP-binding positions include 19–22 (DEGK), 44–47 (NAGH), T136, R150, Q222, T237, and R301. The active-site Proton donor is H47. 297 to 303 (VTTKRKR) provides a ligand contact to substrate. GTP is bound by residues R303, 329–331 (KID), and 413–415 (GTG).

It belongs to the adenylosuccinate synthetase family. In terms of assembly, homodimer. Mg(2+) serves as cofactor.

Its subcellular location is the cytoplasm. It carries out the reaction IMP + L-aspartate + GTP = N(6)-(1,2-dicarboxyethyl)-AMP + GDP + phosphate + 2 H(+). The protein operates within purine metabolism; AMP biosynthesis via de novo pathway; AMP from IMP: step 1/2. Functionally, plays an important role in the de novo pathway and in the salvage pathway of purine nucleotide biosynthesis. Catalyzes the first committed step in the biosynthesis of AMP from IMP. The polypeptide is Adenylosuccinate synthetase (Schistosoma mansoni (Blood fluke)).